Consider the following 207-residue polypeptide: Chloramphenicol acetyltransferase (207 aa).

The active-site Proton acceptor is the His-186.

This sequence belongs to the chloramphenicol acetyltransferase family. As to quaternary structure, homotrimer.

The enzyme catalyses chloramphenicol + acetyl-CoA = chloramphenicol 3-acetate + CoA. Its function is as follows. This enzyme is an effector of chloramphenicol resistance in bacteria. The protein is Chloramphenicol acetyltransferase of Campylobacter coli.